A 497-amino-acid chain; its full sequence is POU domain, class 3, transcription factor 3 (497 aa).

Positions 31-51 are enriched in gly residues; sequence GGGGGGGGGGGGAGGGGGGMQ. Disordered stretches follow at residues 31 to 62, 121 to 189, 230 to 316, and 458 to 497; these read GGGGGGGGGGGGAGGGGGGMQPGSAAVTSGAY, WSGS…WGAA, NGML…TPTS, and EKRMTPPGIQQQTPDDVYSQVGTVSADTPPPHHGLQTSVQ. 2 stretches are compositionally biased toward pro residues: residues 133 to 145 and 170 to 180; these read QQPPRPPPPPPQG and HLGPPPPPPHQ. Over residues 240 to 250 the composition is skewed to gly residues; sequence GGGGGGAGGGA. The span at 269 to 286 shows a compositional bias: basic residues; the sequence is HHHHHHHHAHPHPPHPHH. Residues 311–385 enclose the POU-specific domain; that stretch reads EDTPTSDDLE…LLNKWLEEAD (75 aa). A DNA-binding region (homeobox) is located at residues 403–462; the sequence is KRKKRTSIEVSVKGALESHFLKCPKPSAQEITNLADSLQLEKEVVRVWFCNRRQKEKRMT. A compositionally biased stretch (polar residues) spans 465-483; the sequence is GIQQQTPDDVYSQVGTVSA.

This sequence belongs to the POU transcription factor family. Class-3 subfamily. In terms of assembly, homodimer. Brain.

The protein localises to the nucleus. Transcription factor that acts synergistically with SOX11 and SOX4. Plays a role in neuronal development. Is implicated in an enhancer activity at the embryonic met-mesencephalic junction; the enhancer element contains the octamer motif (5'-ATTTGCAT-3'). This is POU domain, class 3, transcription factor 3 (Pou3f3) from Rattus norvegicus (Rat).